Reading from the N-terminus, the 98-residue chain is uncharacterized protein (98 aa).

This is an uncharacterized protein from Ureaplasma parvum serovar 3 (strain ATCC 700970).